A 355-amino-acid polypeptide reads, in one-letter code: Olfactory receptor 1I1 (355 aa).

The Extracellular portion of the chain corresponds to 1 to 25 (MEPEKQTEISEFFLQGLSEKPEHQT). The chain crosses the membrane as a helical span at residues 26–49 (LLFTMFLSTYLVTIIGNALIILAI). The Cytoplasmic portion of the chain corresponds to 50–57 (ITDSHLHT). A helical membrane pass occupies residues 58–79 (PMYFFLFNLSLVDTLLSSTTVP). Over 80-100 (KMLANIQAQSRAIPFVGCLTQ) the chain is Extracellular. A helical transmembrane segment spans residues 101-120 (MYAFHLFGTMDSFLLAVMAI). Residues 121 to 139 (DRFVAIVHPQRYLVLMCSP) are Cytoplasmic-facing. A helical transmembrane segment spans residues 140–158 (VCGLLLGASWMITNLQSLI). The Extracellular segment spans residues 159–195 (HTCLMAQLTFCAGSEISHFFCDLMPLLKLSGSDTHTN). A helical transmembrane segment spans residues 196–219 (ELVIFAFGIVVGTSPFSCILLSYI). Residues 220-236 (RIFWTVFKIPSTRGKWK) lie on the Cytoplasmic side of the membrane. A helical transmembrane segment spans residues 237–259 (AFSTCGLHLTVVSLSYGTIFAVY). Over 260-272 (LQPTSPSSSQKDK) the chain is Extracellular. A helical membrane pass occupies residues 273–292 (AAALMCGVFIPMLNPFIYSI). The Cytoplasmic portion of the chain corresponds to 293 to 355 (RNKDMKAALG…QSLAGNRDME (63 aa)).

This sequence belongs to the G-protein coupled receptor 1 family.

The protein resides in the cell membrane. Odorant receptor. The sequence is that of Olfactory receptor 1I1 (OR1I1) from Homo sapiens (Human).